We begin with the raw amino-acid sequence, 511 residues long: Synaptotagmin-6 (511 aa).

Over Met-1 to Ser-59 the chain is Vesicular. The tract at residues Cys-12–Gln-38 is cysteine motif. Residues Leu-60–Phe-80 traverse the membrane as a helical segment. The Cytoplasmic portion of the chain corresponds to Trp-81–Leu-511. Over residues Ala-93 to Ser-103 the composition is skewed to low complexity. Disordered regions lie at residues Ala-93 to Lys-118 and Thr-157 to Gln-182. The segment covering Gln-160–His-172 has biased composition (polar residues). At Ser-217 the chain carries Phosphoserine. 2 consecutive C2 domains span residues Ser-230 to Lys-351 and Asp-362 to His-495. Ca(2+) contacts are provided by Asp-261, Asp-267, Asp-319, Phe-320, Asp-321, Ser-324, Asp-327, Asp-393, Asp-399, Asp-453, and Asp-455. The necessary for cell membrane association (isoform 2) stretch occupies residues Met-483–Leu-511.

The protein belongs to the synaptotagmin family. As to quaternary structure, isoform 1: Homodimer; disulfide-linked via the cysteine motif. Isoform 1: Can also form heterodimers with SYT3, SYT7, SYT9 and SYT10. Isoform 1: Interacts with STX1A, STX1B and STX2; the interaction is Ca(2+)-dependent. Isoform 2: Is not able to form homodimer and heterodimers. It depends on Ca(2+) as a cofactor.

Its subcellular location is the cytoplasmic vesicle. The protein localises to the secretory vesicle. The protein resides in the synaptic vesicle membrane. It localises to the membrane. It is found in the cytoplasm. Its subcellular location is the cytosol. The protein localises to the cell membrane. Its function is as follows. May be involved in Ca(2+)-dependent exocytosis of secretory vesicles through Ca(2+) and phospholipid binding to the C2 domain or may serve as Ca(2+) sensors in the process of vesicular trafficking and exocytosis. May mediate Ca(2+)-regulation of exocytosis in acrosomal reaction in sperm. The protein is Synaptotagmin-6 (Syt6) of Rattus norvegicus (Rat).